Here is a 202-residue protein sequence, read N- to C-terminus: Precorrin-2 dehydrogenase (202 aa).

NAD(+) contacts are provided by residues 20 to 21 (TI) and 41 to 42 (PT).

It belongs to the precorrin-2 dehydrogenase / sirohydrochlorin ferrochelatase family. Homodimer.

It carries out the reaction precorrin-2 + NAD(+) = sirohydrochlorin + NADH + 2 H(+). The protein operates within cofactor biosynthesis; adenosylcobalamin biosynthesis; sirohydrochlorin from precorrin-2: step 1/1. It participates in porphyrin-containing compound metabolism; siroheme biosynthesis; sirohydrochlorin from precorrin-2: step 1/1. Functionally, catalyzes the dehydrogenation of precorrin-2 to form sirohydrochlorin which is used as a precursor in both siroheme biosynthesis and in the anaerobic branch of adenosylcobalamin biosynthesis. It is unable to oxidize precorrin-3. The polypeptide is Precorrin-2 dehydrogenase (sirC) (Priestia megaterium (Bacillus megaterium)).